The following is a 404-amino-acid chain: MQPTYKNKKFIDDIDFLNKTVILRVDFNVPIKNGEISSIKRIIASLKTIKKIVNNGGKLVILSHLGRIKSKEDLPKKSLRIVAEKLAEILGQEIKFIPENRGPKVENAISQLEKGEILVLENTRFQDLNNKAESKNDAELGRYWASLGDVFINDAFGTLHRAHGSNVGIATYIKESAIGYLVKEELDALSKLIFSPQRPFYAIIGGAKISDKIGIISTLLEKADKVLIGGGMAYTFKKALGYKIGLSIYEDDKLELAASLVKKYPDKLILALDAALAPEFADLEPLYNQENPLEIPDHLEGMDIGPLTIELFKDHLKDGKTILWNGTLGVAEFKNFARGTKEVAKIIANLKECYSIIGGGDSIAAIEAEGLSNSFSHISTGGGASISFIENGDLIGLGPIQEKD.

Substrate contacts are provided by residues 26–28 (DFN), R41, 64–67 (HLGR), R124, and R161. ATP contacts are provided by residues K212, G301, E332, and 359–362 (GGDS).

This sequence belongs to the phosphoglycerate kinase family. In terms of assembly, monomer.

The protein localises to the cytoplasm. It carries out the reaction (2R)-3-phosphoglycerate + ATP = (2R)-3-phospho-glyceroyl phosphate + ADP. Its pathway is carbohydrate degradation; glycolysis; pyruvate from D-glyceraldehyde 3-phosphate: step 2/5. The chain is Phosphoglycerate kinase from Mesomycoplasma hyopneumoniae (strain 232) (Mycoplasma hyopneumoniae).